A 98-amino-acid chain; its full sequence is Co-chaperonin GroES 1 (98 aa).

This sequence belongs to the GroES chaperonin family. Heptamer of 7 subunits arranged in a ring. Interacts with the chaperonin GroEL.

Its subcellular location is the cytoplasm. Together with the chaperonin GroEL, plays an essential role in assisting protein folding. The GroEL-GroES system forms a nano-cage that allows encapsulation of the non-native substrate proteins and provides a physical environment optimized to promote and accelerate protein folding. GroES binds to the apical surface of the GroEL ring, thereby capping the opening of the GroEL channel. The protein is Co-chaperonin GroES 1 of Rhizobium meliloti (strain 1021) (Ensifer meliloti).